The chain runs to 251 residues: Probable transcriptional regulatory protein Blon_1155/BLIJ_1182 (251 aa).

Belongs to the TACO1 family.

The protein resides in the cytoplasm. The protein is Probable transcriptional regulatory protein Blon_1155/BLIJ_1182 of Bifidobacterium longum subsp. infantis (strain ATCC 15697 / DSM 20088 / JCM 1222 / NCTC 11817 / S12).